We begin with the raw amino-acid sequence, 288 residues long: MAGARLLQEGRVSIVSFTLGASVISLPLLTSSFTEQTLLAAAPGRIALVFFIAALNGLLLLLYKAQLYQVAIRASFLGFAFGCGLLLSITQSPWKPFGWYVCSLSFFHYSEYLVTAMNNPRSLSIDSFLLNHSLEYTLAALSSWVEFTIETTIYPDLKQITWLSVIGLIMVLFGEVLRKCAMLTAGSNFNHIVQNEKSDSHTLVTSGVYSWFRHPSYVGWFYWSIGTQVLLCNPLCLVGYTLASWRFFSERIEEEEFSLIHFFGENYLEYKKKVPTGLPFIKGVKMEP.

A helical membrane pass occupies residues 13-29 (SIVSFTLGASVISLPLL). The Lumenal segment spans residues 30-45 (TSSFTEQTLLAAAPGR). Residues 46-63 (IALVFFIAALNGLLLLLY) form a helical membrane-spanning segment. The Cytoplasmic portion of the chain corresponds to 64–73 (KAQLYQVAIR). A helical membrane pass occupies residues 74 to 91 (ASFLGFAFGCGLLLSITQ). Topologically, residues 92–96 (SPWKP) are lumenal. Residues 97-116 (FGWYVCSLSFFHYSEYLVTA) form a helical membrane-spanning segment. The Cytoplasmic portion of the chain corresponds to 117 to 135 (MNNPRSLSIDSFLLNHSLE). A helical membrane pass occupies residues 136 to 153 (YTLAALSSWVEFTIETTI). At 154-158 (YPDLK) the chain is on the lumenal side. The helical transmembrane segment at 159-178 (QITWLSVIGLIMVLFGEVLR) threads the bilayer. Topologically, residues 179 to 216 (KCAMLTAGSNFNHIVQNEKSDSHTLVTSGVYSWFRHPS) are cytoplasmic. S-adenosyl-L-methionine is bound by residues Gln194, 201 to 204 (HTLV), Tyr209, and 214 to 217 (HPSY). A helical membrane pass occupies residues 217 to 232 (YVGWFYWSIGTQVLLC). Asn233 is a topological domain (lumenal). The chain crosses the membrane as a helical span at residues 234-248 (PLCLVGYTLASWRFF). Residues 249–288 (SERIEEEEFSLIHFFGENYLEYKKKVPTGLPFIKGVKMEP) lie on the Cytoplasmic side of the membrane. Arg251 lines the substrate pocket. Residue Glu255 participates in S-adenosyl-L-methionine binding.

Belongs to the class VI-like SAM-binding methyltransferase superfamily. Isoprenylcysteine carboxyl methyltransferase family.

It is found in the endoplasmic reticulum membrane. The enzyme catalyses [protein]-C-terminal S-[(2E,6E)-farnesyl]-L-cysteine + S-adenosyl-L-methionine = [protein]-C-terminal S-[(2E,6E)-farnesyl]-L-cysteine methyl ester + S-adenosyl-L-homocysteine. Functionally, catalyzes the post-translational methylation of isoprenylated C-terminal cysteine residues. This Xenopus laevis (African clawed frog) protein is Protein-S-isoprenylcysteine O-methyltransferase (icmt).